An 811-amino-acid polypeptide reads, in one-letter code: Probable disease resistance protein At5g04720 (811 aa).

One can recognise an RPW8 domain in the interval 1–147 (MADIIGGEVV…KVDSLNEKLG (147 aa)). NB-ARC domains lie at 180–242 (VGLD…VSQS) and 312–437 (TYDV…NVLV). 207–214 (GMSGSGKT) provides a ligand contact to ATP. 5 LRR repeats span residues 650–674 (FPKL…ICGI), 676–699 (SLNS…SKLK), 700–722 (ALQL…ICEL), 724–746 (RLKY…IGKV), and 748–769 (TLEK…VVLL).

This sequence belongs to the disease resistance NB-LRR family.

Probable disease resistance protein. The chain is Probable disease resistance protein At5g04720 from Arabidopsis thaliana (Mouse-ear cress).